The sequence spans 380 residues: Putative F-box/kelch-repeat protein At2g44030 (380 aa).

The region spanning 16–66 is the F-box domain; the sequence is PKSFLSLPYDVVFNCLSRVSRTHDPILSLVSKSFRSLLALPDLEAERFRIL. Kelch repeat units follow at residues 123–170 and 172–219; these read EIYL…VIDG and INVY…ALIK.

The protein is Putative F-box/kelch-repeat protein At2g44030 of Arabidopsis thaliana (Mouse-ear cress).